The primary structure comprises 552 residues: FERRY endosomal RAB5 effector complex subunit 3 (552 aa).

Residue S79 is modified to Phosphoserine.

In terms of assembly, component of the FERRY complex composed of five subunits, TBCK, PPP1R21, FERRY3, CRYZL1 and GATD1 with a ratio of 1:2:1:2:4, respectively.

It localises to the cytoplasm. The protein localises to the early endosome. In terms of biological role, component of the FERRY complex (Five-subunit Endosomal Rab5 and RNA/ribosome intermediary). The FERRY complex directly interacts with mRNAs and RAB5A, and functions as a RAB5A effector involved in the localization and the distribution of specific mRNAs most likely by mediating their endosomal transport. The complex recruits mRNAs and ribosomes to early endosomes through direct mRNA-interaction. Plays a role in mast cell degranulation. In Rattus norvegicus (Rat), this protein is FERRY endosomal RAB5 effector complex subunit 3.